We begin with the raw amino-acid sequence, 122 residues long: Ribonuclease P protein component 1 (122 aa).

The protein belongs to the eukaryotic/archaeal RNase P protein component 1 family. Consists of a catalytic RNA component and at least 4-5 protein subunits.

The protein localises to the cytoplasm. The catalysed reaction is Endonucleolytic cleavage of RNA, removing 5'-extranucleotides from tRNA precursor.. In terms of biological role, part of ribonuclease P, a protein complex that generates mature tRNA molecules by cleaving their 5'-ends. The chain is Ribonuclease P protein component 1 from Thermococcus sibiricus (strain DSM 12597 / MM 739).